The following is a 333-amino-acid chain: Phospholipid phosphatase-related protein type 1 (333 aa).

3 helical membrane-spanning segments follow: residues 12–32 (IIPC…LLAY), 66–86 (FIQP…IIFV), and 126–146 (FIGV…AGQV). Asn-162 is a glycosylation site (N-linked (GlcNAc...) asparagine). 3 helical membrane-spanning segments follow: residues 200 to 217 (ASLS…ITST), 223 to 243 (SRLA…LTGL), and 256 to 276 (VVAG…CVVN).

Belongs to the PA-phosphatase related phosphoesterase family.

Its subcellular location is the cell membrane. It localises to the cell projection. The protein resides in the neuron projection. May play a role in neurite outgrowth and neurogenesis. This is Phospholipid phosphatase-related protein type 1 (plppr1) from Danio rerio (Zebrafish).